A 429-amino-acid polypeptide reads, in one-letter code: Ribosomal RNA small subunit methyltransferase B (429 aa).

Residues Cys-254–Lys-260, Asp-277, Asp-303, and Asp-322 each bind S-adenosyl-L-methionine. The active-site Nucleophile is Cys-375. The tract at residues Ala-397–Asp-419 is disordered. Polar residues predominate over residues Glu-400–Leu-412.

It belongs to the class I-like SAM-binding methyltransferase superfamily. RsmB/NOP family.

The protein resides in the cytoplasm. It catalyses the reaction cytidine(967) in 16S rRNA + S-adenosyl-L-methionine = 5-methylcytidine(967) in 16S rRNA + S-adenosyl-L-homocysteine + H(+). Functionally, specifically methylates the cytosine at position 967 (m5C967) of 16S rRNA. The protein is Ribosomal RNA small subunit methyltransferase B of Salmonella paratyphi B (strain ATCC BAA-1250 / SPB7).